A 309-amino-acid polypeptide reads, in one-letter code: MPIRVPDELPAVNFLREENVFVMTTSRASGQEIRPLKVLILNLMPKKIETENQFLRLLSNSPLQVDIQLLRIDSRESRNTPAEHLNNFYCNFEDIQEQNFDGLIVTGAPLGLVEFNDVAYWPQIKQVLEWSKDHVTSTLFVCWAVQAALNILYGIPKQTRTDKLSGVYEHHILHPHALLTRGFDDSFLAPHSRYADFPAALIRDYTDLEILAETEEGDAYLFASKDKRIAFVTGHPEYDAQTLAQEYFRDVEAGLDPDVPYNYFPHNDPQNTPRASWRSHGNLLFTNWLNYYVYQITPYDLRHMNPTLD.

The active-site Acyl-thioester intermediate is the Cys142. Lys163 and Ser192 together coordinate substrate. The active-site Proton acceptor is the His235. The active site involves Glu237. Arg249 provides a ligand contact to substrate.

The protein belongs to the MetA family. In terms of assembly, homodimer.

It localises to the cytoplasm. It carries out the reaction L-homoserine + succinyl-CoA = O-succinyl-L-homoserine + CoA. It functions in the pathway amino-acid biosynthesis; L-methionine biosynthesis via de novo pathway; O-succinyl-L-homoserine from L-homoserine: step 1/1. Functionally, transfers a succinyl group from succinyl-CoA to L-homoserine, forming succinyl-L-homoserine. In Escherichia coli O127:H6 (strain E2348/69 / EPEC), this protein is Homoserine O-succinyltransferase.